Here is a 288-residue protein sequence, read N- to C-terminus: Co-chaperone protein DjlA (288 aa).

Topologically, residues M1 to K6 are periplasmic. The helical transmembrane segment at I7 to H30 threads the bilayer. The Cytoplasmic segment spans residues I31–K288. Residues D222–K288 enclose the J domain.

As to quaternary structure, homodimer.

The protein resides in the cell inner membrane. Regulatory DnaK co-chaperone. Direct interaction between DnaK and DjlA is needed for the induction of the wcaABCDE operon, involved in the synthesis of a colanic acid polysaccharide capsule, possibly through activation of the RcsB/RcsC phosphotransfer signaling pathway. The colanic acid capsule may help the bacterium survive conditions outside the host. This is Co-chaperone protein DjlA from Mannheimia succiniciproducens (strain KCTC 0769BP / MBEL55E).